The sequence spans 291 residues: tRNA dimethylallyltransferase (291 aa).

An ATP-binding site is contributed by 17–24 (GPTASGKS). Position 19–24 (19–24 (TASGKS)) interacts with substrate.

It belongs to the IPP transferase family. Monomer. Mg(2+) serves as cofactor.

The catalysed reaction is adenosine(37) in tRNA + dimethylallyl diphosphate = N(6)-dimethylallyladenosine(37) in tRNA + diphosphate. Catalyzes the transfer of a dimethylallyl group onto the adenine at position 37 in tRNAs that read codons beginning with uridine, leading to the formation of N6-(dimethylallyl)adenosine (i(6)A). This chain is tRNA dimethylallyltransferase, found in Cereibacter sphaeroides (strain ATCC 17025 / ATH 2.4.3) (Rhodobacter sphaeroides).